The chain runs to 208 residues: Probable hydrolase YcaC (208 aa).

Residue Cys-118 is part of the active site.

As to quaternary structure, homooctamer composed of two tetrameric rings.

The protein is Probable hydrolase YcaC (ycaC) of Escherichia coli (strain K12).